Consider the following 138-residue polypeptide: Small ribosomal subunit protein uS11c (138 aa).

The disordered stretch occupies residues 1-24; the sequence is MTKPIPRIGSRKNGRISSRKNGRR. The span at 9 to 24 shows a compositional bias: basic residues; the sequence is GSRKNGRISSRKNGRR.

It belongs to the universal ribosomal protein uS11 family. Part of the 30S ribosomal subunit.

The protein localises to the plastid. It is found in the chloroplast. The sequence is that of Small ribosomal subunit protein uS11c from Chloranthus spicatus (Chulantree).